We begin with the raw amino-acid sequence, 479 residues long: Anaerobic nitric oxide reductase flavorubredoxin (479 aa).

The zinc metallo-hydrolase stretch occupies residues 30–210; it reads LRGSSYNSYL…PFSRLVTPKI (181 aa). Residues His-79, Glu-81, Asp-83, His-147, Asp-166, and His-227 each contribute to the Fe cation site. Positions 254–393 constitute a Flavodoxin-like domain; sequence ITIFYDTMSN…LCRQHGRDIA (140 aa). Residues 260–264 and 342–369 each bind FMN; these read TMSNN and AFGS…EMSL. The Rubredoxin-like domain maps to 423-474; sequence GPKMQCSVCQWIYDPALGEPLQDVAPGTPWSDVPDNFLCPECSLGKDVFDVL. 4 residues coordinate Fe cation: Cys-428, Cys-431, Cys-461, and Cys-464.

In the N-terminal section; belongs to the zinc metallo-hydrolase group 3 family. Homotetramer. Fe cation serves as cofactor. It depends on FMN as a cofactor.

The protein resides in the cytoplasm. It participates in nitrogen metabolism; nitric oxide reduction. Anaerobic nitric oxide reductase; uses NADH to detoxify nitric oxide (NO), protecting several 4Fe-4S NO-sensitive enzymes. Has at least 2 reductase partners, only one of which (NorW, flavorubredoxin reductase) has been identified. NO probably binds to the di-iron center; electrons enter from the NorW at rubredoxin and are transferred sequentially to the FMN center and the di-iron center. Also able to function as an aerobic oxygen reductase. The protein is Anaerobic nitric oxide reductase flavorubredoxin of Salmonella arizonae (strain ATCC BAA-731 / CDC346-86 / RSK2980).